The following is a 577-amino-acid chain: ER degradation-enhancing alpha-mannosidase-like protein 2 (577 aa).

An N-terminal signal peptide occupies residues 1–21 (MPFRLLIPLGLVCVLLPLHHG). N90, N112, N289, and N450 each carry an N-linked (GlcNAc...) asparagine glycan. Positions 513–561 (PKRAQRKTVRSGPWEPQSGPATLSSPANQPREKQPAQQRTPLLSCPSQP) are disordered. Polar residues-rich tracts occupy residues 531-540 (GPATLSSPAN) and 547-561 (PAQQ…PSQP).

Belongs to the glycosyl hydrolase 47 family. N-glycosylated.

The protein localises to the endoplasmic reticulum lumen. Involved in the endoplasmic reticulum-associated degradation (ERAD) pathway that targets misfolded glycoproteins for degradation in an N-glycan-dependent manner. May initiate ERAD by promoting the first mannose trimming step of ERAD substrates, from Man9GlcNAc2 to Man8GlcNAc2. Seems to recognize and bind to exposed hydrophobic regions in target proteins. This chain is ER degradation-enhancing alpha-mannosidase-like protein 2, found in Mus musculus (Mouse).